Reading from the N-terminus, the 247-residue chain is Probable dihydroorotate dehydrogenase B (NAD(+)), electron transfer subunit (247 aa).

Residues 1–87 (MLRRVSIEET…RGPYGHGFSG (87 aa)) form the FAD-binding FR-type domain. Residues Cys201, Cys206, Cys209, and Cys217 each coordinate [2Fe-2S] cluster.

It belongs to the PyrK family. Heterotetramer of 2 PyrK and 2 PyrD type B subunits. Requires [2Fe-2S] cluster as cofactor. The cofactor is FAD.

Its pathway is pyrimidine metabolism; UMP biosynthesis via de novo pathway; orotate from (S)-dihydroorotate (NAD(+) route): step 1/1. In terms of biological role, responsible for channeling the electrons from the oxidation of dihydroorotate from the FMN redox center in the PyrD type B subunit to the ultimate electron acceptor NAD(+). This is Probable dihydroorotate dehydrogenase B (NAD(+)), electron transfer subunit from Pyrococcus furiosus (strain ATCC 43587 / DSM 3638 / JCM 8422 / Vc1).